Reading from the N-terminus, the 181-residue chain is Inner membrane-spanning protein YciB (181 aa).

Helical transmembrane passes span 22 to 42, 50 to 70, 80 to 100, 122 to 142, and 148 to 168; these read IYTA…VTYA, MQLI…FLHD, IVYC…KPVI, WVLF…EMPL, and FKVF…GMYV.

Belongs to the YciB family.

It is found in the cell inner membrane. Functionally, plays a role in cell envelope biogenesis, maintenance of cell envelope integrity and membrane homeostasis. This Aliivibrio fischeri (strain MJ11) (Vibrio fischeri) protein is Inner membrane-spanning protein YciB.